Consider the following 194-residue polypeptide: MRKAEVKRKTAETDIYVELNIDGKGSYDIKTGIGFFDHMLSLFAKHGLFDLKVIAKGDLEVDTHHTVEDVGIVLGTAFLKASGDKKSIKRFSTFYVPMDEALVRVSLDISGRPYLYYDLPLKAERVGNFETETVEEFFRAFAYNFGITLHVELLHGVNTHHIIEASFKALGKALDEALKLDERIDGIPSTKGIL.

This sequence belongs to the imidazoleglycerol-phosphate dehydratase family.

Its subcellular location is the cytoplasm. It catalyses the reaction D-erythro-1-(imidazol-4-yl)glycerol 3-phosphate = 3-(imidazol-4-yl)-2-oxopropyl phosphate + H2O. Its pathway is amino-acid biosynthesis; L-histidine biosynthesis; L-histidine from 5-phospho-alpha-D-ribose 1-diphosphate: step 6/9. The sequence is that of Imidazoleglycerol-phosphate dehydratase from Caldanaerobacter subterraneus subsp. tengcongensis (strain DSM 15242 / JCM 11007 / NBRC 100824 / MB4) (Thermoanaerobacter tengcongensis).